The primary structure comprises 194 residues: Phosphoheptose isomerase (194 aa).

Residues 37-194 enclose the SIS domain; sequence ISNSFKQGGK…LIEFEMAKQA (158 aa). 52–54 contacts substrate; that stretch reads NGG. His-61 and Glu-65 together coordinate Zn(2+). Substrate contacts are provided by residues Glu-65, 93–94, 119–121, Ser-124, and Gln-172; these read ND and STS. The Zn(2+) site is built by Gln-172 and His-180.

The protein belongs to the SIS family. GmhA subfamily. As to quaternary structure, homotetramer. Requires Zn(2+) as cofactor.

It is found in the cytoplasm. The enzyme catalyses 2 D-sedoheptulose 7-phosphate = D-glycero-alpha-D-manno-heptose 7-phosphate + D-glycero-beta-D-manno-heptose 7-phosphate. It functions in the pathway carbohydrate biosynthesis; D-glycero-D-manno-heptose 7-phosphate biosynthesis; D-glycero-alpha-D-manno-heptose 7-phosphate and D-glycero-beta-D-manno-heptose 7-phosphate from sedoheptulose 7-phosphate: step 1/1. In terms of biological role, catalyzes the isomerization of sedoheptulose 7-phosphate in D-glycero-D-manno-heptose 7-phosphate. The chain is Phosphoheptose isomerase from Haemophilus influenzae (strain PittEE).